The sequence spans 209 residues: Yop proteins translocation protein K (209 aa).

Belongs to an operon involved in the translocation of Yop proteins across the bacterial membranes or in the specific control of this function. In Yersinia pseudotuberculosis serotype I (strain IP32953), this protein is Yop proteins translocation protein K (yscK).